The sequence spans 127 residues: Fluoride-specific ion channel FluC (127 aa).

Transmembrane regions (helical) follow at residues 4–24 (LLLAVFIGGGTGSVARWLLSM), 35–55 (LGTLTANLIGAFIIGIGFAWF), 71–91 (TGFCGGLTTFSTFSAEVVFLL), and 103–123 (VFVNLLGSFAMTALAFWLFSA). Na(+)-binding residues include Gly75 and Thr78.

It belongs to the fluoride channel Fluc/FEX (TC 1.A.43) family.

It localises to the cell inner membrane. It carries out the reaction fluoride(in) = fluoride(out). Its activity is regulated as follows. Na(+) is not transported, but it plays an essential structural role and its presence is essential for fluoride channel function. Functionally, fluoride-specific ion channel. Important for reducing fluoride concentration in the cell, thus reducing its toxicity. The chain is Fluoride-specific ion channel FluC from Escherichia coli (strain K12 / MC4100 / BW2952).